Reading from the N-terminus, the 258-residue chain is Cell division protein FtsQ (258 aa).

The Cytoplasmic segment spans residues 1 to 29; sequence MAKNAPAPRGARRKPVKKVGVPLRERVAT. A helical transmembrane segment spans residues 30-50; it reads AVPWMLVGSVAMVSLLAVIYL. Over 51-258 the chain is Periplasmic; sequence PAALDGYPIR…MAVTWREQQS (208 aa). In terms of domain architecture, POTRA spans 57–127; it reads YPIRKVGVDG…DTVVLTVEER (71 aa).

The protein belongs to the FtsQ/DivIB family. FtsQ subfamily. As to quaternary structure, part of a complex composed of FtsB, FtsL and FtsQ.

It is found in the cell inner membrane. Functionally, essential cell division protein. May link together the upstream cell division proteins, which are predominantly cytoplasmic, with the downstream cell division proteins, which are predominantly periplasmic. May control correct divisome assembly. The protein is Cell division protein FtsQ of Alcanivorax borkumensis (strain ATCC 700651 / DSM 11573 / NCIMB 13689 / SK2).